Here is a 371-residue protein sequence, read N- to C-terminus: Glutamate 5-kinase (371 aa).

Lys-10 is an ATP binding site. Substrate contacts are provided by Ser-50, Asp-137, and Asn-149. Residues 169–170 (SD) and 208–214 (TGGMFTK) each bind ATP. Residues 274–352 (EGRIYIDDGA…EEIRNILGED (79 aa)) form the PUA domain.

This sequence belongs to the glutamate 5-kinase family.

It is found in the cytoplasm. The enzyme catalyses L-glutamate + ATP = L-glutamyl 5-phosphate + ADP. The protein operates within amino-acid biosynthesis; L-proline biosynthesis; L-glutamate 5-semialdehyde from L-glutamate: step 1/2. Catalyzes the transfer of a phosphate group to glutamate to form L-glutamate 5-phosphate. The protein is Glutamate 5-kinase of Dictyoglomus turgidum (strain DSM 6724 / Z-1310).